Here is a 321-residue protein sequence, read N- to C-terminus: Cytochrome c biogenesis protein CcsA (321 aa).

Transmembrane regions (helical) follow at residues 17–37 (IISIVISVHLIKFLVPEIIGL), 41–61 (LEKGIITTSFCITGLLIIRWV), 68–88 (LSNLYESLMFLSWGFSTIHIF), 143–163 (MLLSYGALLCGSLLSVSLLVI), 227–247 (IINLGFTLLTIGILSGAVWAN), 260–277 (ETWAFITWTIFATYLHTR), and 288–308 (AIVASIGFLIIWICYFGVNLL).

The protein belongs to the CcmF/CycK/Ccl1/NrfE/CcsA family. In terms of assembly, may interact with Ccs1.

The protein localises to the plastid. It localises to the chloroplast thylakoid membrane. Required during biogenesis of c-type cytochromes (cytochrome c6 and cytochrome f) at the step of heme attachment. This chain is Cytochrome c biogenesis protein CcsA, found in Piper cenocladum (Ant piper).